A 305-amino-acid chain; its full sequence is UDP-3-O-acyl-N-acetylglucosamine deacetylase (305 aa).

Zn(2+) contacts are provided by His79, His238, and Asp242. His265 acts as the Proton donor in catalysis.

The protein belongs to the LpxC family. It depends on Zn(2+) as a cofactor.

It catalyses the reaction a UDP-3-O-[(3R)-3-hydroxyacyl]-N-acetyl-alpha-D-glucosamine + H2O = a UDP-3-O-[(3R)-3-hydroxyacyl]-alpha-D-glucosamine + acetate. It functions in the pathway glycolipid biosynthesis; lipid IV(A) biosynthesis; lipid IV(A) from (3R)-3-hydroxytetradecanoyl-[acyl-carrier-protein] and UDP-N-acetyl-alpha-D-glucosamine: step 2/6. Its function is as follows. Catalyzes the hydrolysis of UDP-3-O-myristoyl-N-acetylglucosamine to form UDP-3-O-myristoylglucosamine and acetate, the committed step in lipid A biosynthesis. This is UDP-3-O-acyl-N-acetylglucosamine deacetylase from Citrobacter koseri (strain ATCC BAA-895 / CDC 4225-83 / SGSC4696).